Consider the following 249-residue polypeptide: Kallikrein-7 (249 aa).

The first 21 residues, 1–21 (MGVWLLSLITVLLSLALETAG), serve as a signal peptide directing secretion. A propeptide spans 22–25 (QGER) (activation peptide). The serine protease stretch occupies residues 26-246 (IIDGYKCKEG…YKRWVMETMK (221 aa)). 6 cysteine pairs are disulfide-bonded: C32–C161, C51–C67, C133–C235, C140–C207, C172–C186, and C197–C222. Active-site charge relay system residues include H66 and D108. S201 acts as the Charge relay system in catalysis.

This sequence belongs to the peptidase S1 family. Kallikrein subfamily. In terms of tissue distribution, expressed in skin and, at lower levels, in lung, kidney, brain, heart and spleen. In skin, expressed in high suprabasal keratinocytes and in the luminal parts of hair follicles. Not detected in liver and skeletal muscle.

It is found in the secreted. The catalysed reaction is Cleavage of proteins with aromatic side chains in the P1 position.. Inhibited by Zn2+ and Cu2+ at low micromolar concentrations. Inhibited by SERPINA12. Functionally, may catalyze the degradation of intercellular cohesive structures in the cornified layer of the skin in the continuous shedding of cells from the skin surface. Specific for amino acid residues with aromatic side chains in the P1 position. Cleaves insulin A chain at '14-Tyr-|-Gln-15' and insulin B chain at '6-Leu-|-Cys-7', '16-Tyr-|-Leu-17', '25-Phe-|-Tyr-26' and '26-Tyr-|-Thr-27'. Could play a role in the activation of precursors to inflammatory cytokines. The sequence is that of Kallikrein-7 (Klk7) from Mus musculus (Mouse).